We begin with the raw amino-acid sequence, 1273 residues long: MEIVSRAWESVDWDRIQTRVEAEVTALGQRQDDSEIRKTRLVEESNAYRGRTNKDSRKVAIPLIKAFQSEFDGLLARSTAAENALIDICKSIVSLPDPKSLLKGAEAWKNDAEKTQKAVEEREELKRQLIKVNNELEDLRGKDVKVRKLKDKLAKLESEQDIFIENAVNEVEKKAEQELNDRLTELIAEKEKMKEQNEILEKNMDSLESKNKDIQRKLEIAKQTVEQKDGLENEQLSIAMKDLADAKHKIVFLEERVSQLENEAEKVNESKKAGNIEDIAALGSVLVQKDDVIQQLTNDIKRHEASHVEELAKWKLAVSAVEKKNKTLIGELNELKNQLESRNDYEAIKNELRLLREIEFGDSAEANAESIERLGETVETLDRLLAEKNRRLQNENASLRVANDGFKGDEVMKAIVSGSHSRVVETVGKRVGAEEANSYRQKNTDSELIEKIQEAKRNKAVCELKFEDPTINVLTYLKNQKAKEAGKRDAPTPILAAPVTPKHVTKLGTHTITTTALPPRTQTAETTQSILQRLSNGSNKHLLNEDLKLSTVLNLKRFSGNPAKPLEAKTSEEQKAELETIEKMQKRIQVNVQALNGHPLNTTEIASHCKRLMIAYNIGQRLFAKHVMNQVVKSQGSLSELLSKPRHWNKLTDKGREAFRRIYGWISDDEAINLLCSLSPRRVWPADQNIEHPKAETLLDTSDPMEFKEEPVIRYDVTPKVEPVIEKIKSPVESPCSSQAGASSLRASRWRHDDISKEKILSILQTELKKIEEETTESKVVVPVKPTATGGNRRFSSNSTYESSSLTGKSRPSTVELILKQRISTGLQPLTQAQYDAYTVLDTDFLVKQIKEFLTMNSISQRQFGEYILGLSQGSVSDLLARPKTWAQLTQKGREPFIRMQLFMDDVEASEENDEKQPKITICDEDSDLAKTLATLLNAVHREPSEPKTSVKLEPLSEIDVIMQVPSASKPSSVVKSIDESSGEEILDTFEIVYQVKGILEENGISPRVFGDEYLHCTSSMCADLMIRTKSFENSKASEKLMYTRMKTFLSDPIAIPLLVEKEESKETVKAKIESVPAPREAPRPVKRKHSSDTDDYDLNTKKPIQRTVITDYQKDTLRFVFVNEQHPSNELCEQISLKLDMSLRTVQNWFHNHRTRSKAREKEGKVYSDALPNGTAVKSLTWKDDLQKMLDEAPAITSQWAPDYQNRAGSVKSSTSADSPTNNNYSSPIFSFDKASTTSTVKKPSSTGKLDNLVARMIRLAEGREAAAAKAS.

Coiled coils occupy residues 101–407 (LLKG…DGFK) and 440–468 (RQKN…KFED). 3 consecutive DNA-binding regions (CUT) follow at residues 591–681 (NVQA…LSPR), 832–919 (QAQY…KQPK), and 978–1065 (IDES…KEES). The disordered stretch occupies residues 1069-1100 (VKAKIESVPAPREAPRPVKRKHSSDTDDYDLN). The segment at residues 1103 to 1162 (KPIQRTVITDYQKDTLRFVFVNEQHPSNELCEQISLKLDMSLRTVQNWFHNHRTRSKARE) is a DNA-binding region (homeobox).

It belongs to the CUT homeobox family.

The protein localises to the nucleus. In terms of biological role, probable DNA-binding regulatory protein involved in cell-fate specification. This chain is Homeobox protein cut-like ceh-44, found in Caenorhabditis elegans.